The primary structure comprises 435 residues: Ras association domain-containing protein 9 (435 aa).

Residues 1-22 (MAPFGRNLLKTRHKNRSPTKDM) form a disordered region. Positions 25–119 (EEKEIVVWVC…MQFVLVKADA (95 aa)) constitute a Ras-associating domain. Residues 195–290 (HTIHQQVKRM…DKLSAEIEKE (96 aa)) adopt a coiled-coil conformation. The tract at residues 380 to 435 (NRAKESEVPSSNGEIPPFTQRVFSNYTNDTDSDTGISSNHSQDSETTVGDVVLLST) is disordered. The span at 400–426 (RVFSNYTNDTDSDTGISSNHSQDSETT) shows a compositional bias: polar residues.

Interacts with PAM.

It is found in the endosome. In terms of biological role, may play a role in regulating vesicuar trafficking in cells. The protein is Ras association domain-containing protein 9 (RASSF9) of Homo sapiens (Human).